We begin with the raw amino-acid sequence, 215 residues long: Cytidylate kinase (215 aa).

10–18 (GPAASGKGT) serves as a coordination point for ATP.

This sequence belongs to the cytidylate kinase family. Type 1 subfamily.

The protein resides in the cytoplasm. It catalyses the reaction CMP + ATP = CDP + ADP. The enzyme catalyses dCMP + ATP = dCDP + ADP. This Bartonella bacilliformis (strain ATCC 35685 / KC583 / Herrer 020/F12,63) protein is Cytidylate kinase.